The sequence spans 816 residues: Phosphatidylinositol 4-kinase beta (816 aa).

Disordered regions lie at residues 1 to 30 (MGDM…GSLL), 101 to 120 (EDEM…RRRR), and 250 to 318 (RKRE…SFSS). Residue Gly2 is modified to N-acetylglycine. Positions 2–68 (GDMVVEPATL…VKLLHGGVAI (67 aa)) are interaction with ACBD3. The segment covering 10 to 30 (TLKPTSEPTPSPSGNNGGSLL) has biased composition (low complexity). The 191-residue stretch at 52–242 (CQEVLEKVKL…GTKLRKLILS (191 aa)) folds into the PIK helical domain. The residue at position 258 (Ser258) is a Phosphoserine. Thr263 carries the phosphothreonine modification. A phosphoserine mark is found at Ser266, Ser275, Ser277, Ser284, and Ser294. Composition is skewed to polar residues over residues 278–297 (DATA…SNPK) and 306–318 (SSST…SFSS). Ser428 is modified (phosphoserine). At Thr438 the chain carries Phosphothreonine. The residue at position 511 (Ser511) is a Phosphoserine. Phosphothreonine is present on residues Thr517 and Thr519. Residues 535–801 (EPWQEKVRRI…MVDGSMRSIT (267 aa)) form the PI3K/PI4K catalytic domain. The segment at 541-547 (VRRIREG) is G-loop. Positions 668 to 676 (QVKDRHNGN) are catalytic loop. Residues 687-711 (HIDFGFILSSSPRNLGFETSAFKLT) form an activation loop region.

The protein belongs to the PI3/PI4-kinase family. Type III PI4K subfamily. In terms of assembly, interacts with ARF1 and ARF3 in the Golgi complex, but not with ARF4, ARF5 or ARF6. Interacts with NCS1/FREQ in a calcium-independent manner. Interacts with CALN1/CABP8 and CALN2/CABP7; in a calcium-dependent manner; this interaction competes with NCS1/FREQ binding. Interacts with ACBD3. Interacts with ARMH3, YWHAB, YWHAE, YWHAG, YWHAH, YWHAQ, YWHAZ and SFN. Interacts with GGA2 (via VHS domain); the interaction is important for PI4KB location at the Golgi apparatus membrane. Interacts with ATG9A. Requires Mg(2+) as cofactor. It depends on Mn(2+) as a cofactor.

The protein resides in the endomembrane system. It is found in the mitochondrion outer membrane. Its subcellular location is the rough endoplasmic reticulum membrane. The protein localises to the golgi apparatus. It localises to the golgi apparatus membrane. The enzyme catalyses a 1,2-diacyl-sn-glycero-3-phospho-(1D-myo-inositol) + ATP = a 1,2-diacyl-sn-glycero-3-phospho-(1D-myo-inositol 4-phosphate) + ADP + H(+). With respect to regulation, inhibited by wortmannin. Increased kinase activity upon interaction with NCS1/FREQ. Its function is as follows. Phosphorylates phosphatidylinositol (PI) in the first committed step in the production of the second messenger inositol-1,4,5,-trisphosphate (PIP). May regulate Golgi disintegration/reorganization during mitosis, possibly via its phosphorylation. Involved in Golgi-to-plasma membrane trafficking. May play an important role in the inner ear development. This chain is Phosphatidylinositol 4-kinase beta (Pi4kb), found in Mus musculus (Mouse).